The sequence spans 584 residues: MASLSSQSKLLATPYSFPYHTKPSRVSLRRVSCKASNDNKDKPNDQEKTFSIDRRNMLIGLGGLYGASNVFPSNQSTLAAPIQPPVLPDSCHPPEDLAEGVNVLCCPPDVKDPIDFQMPSNPSRLRIRPAAHLADPTYIEKYKKALAAMKALPQNDPRSFYQQANIHCAYCNGAYDQVGFPDVNIQVHHSWLFLPFHRWYLYFYERILGSLIDDPTFAIPFWNWDAPKGMHMPHMFIDPNSPLYDAKRNPAHFPDTIVDLDFSSGEAPSHNPRQIGNNLSIMYKQVVRAKKARLFHGRPLQAGSFPDESGDGSLEGTPHGNIHLWSGDPRQSNFENMGNFYSAGRDPLFYAHHANVDRMWYIWKNSLGRKDYKKKDWLNAGFLLFDENAQPVRVYVRDALDERKLGYAYQEVDIPWINSKPKPRKANPWPNRLRSKATTTTKLINKFPLTLDSTVSFEVKRPKKSRSKSEKEDEEEVLVIEKIKHEPQFPLKFDVYINDEDEDPSAADQTEFAGSFVNVPHFHRHGDKKDKRQTTNLSIGISEVLDELDVDGDDSIVVTLVPRVGSGQITIGGAKIEFVRDEED.

Residues 1 to 32 constitute a chloroplast transit peptide; that stretch reads MASLSSQSKLLATPYSFPYHTKPSRVSLRRVS. The N-terminal 47 residues, 33–79, are a transit peptide targeting the thylakoid; it reads CKASNDNKDKPNDQEKTFSIDRRNMLIGLGGLYGASNVFPSNQSTLA. Intrachain disulfides connect Cys91–Cys106 and Cys105–Cys168. Cu cation is bound by residues His167, His188, His197, His319, His323, and His353. Positions 171–188 form a cross-link, 2'-(S-cysteinyl)-histidine (Cys-His); that stretch reads CNGAYDQVGFPDVNIQVH. Residues 432 to 584 constitute a propeptide, removed in mature form; sequence RLRSKATTTT…KIEFVRDEED (153 aa).

Belongs to the tyrosinase family. The cofactor is Cu(2+).

Its subcellular location is the plastid. The protein resides in the chloroplast thylakoid lumen. It carries out the reaction (+)-larreatricin + AH2 + O2 = (+)-3'-hydroxylarreatricin + A + H2O. Functionally, enantio-specific polyphenol oxidase involved in aromatic ring hydroxylation. Involved in the biosynthesis of the creosote bush 8-8' linked lignans. Has a strong preference for the 3' position of (+)-larreatricin. This chain is (+)-larreatricin hydroxylase, chloroplastic, found in Larrea tridentata (Creosote bush).